The chain runs to 290 residues: Phosphoribulokinase 1 (290 aa).

12-20 (GSSGAGTST) contacts ATP.

The protein belongs to the phosphoribulokinase family. In terms of assembly, homooctamer.

The catalysed reaction is D-ribulose 5-phosphate + ATP = D-ribulose 1,5-bisphosphate + ADP + H(+). It participates in carbohydrate biosynthesis; Calvin cycle. Its activity is regulated as follows. Activated by NADH and inhibited by phosphoenolpyruvate. This is Phosphoribulokinase 1 (prkA) from Cereibacter sphaeroides (Rhodobacter sphaeroides).